The primary structure comprises 353 residues: Photosystem II D2 protein (353 aa).

Residue Thr2 is modified to N-acetylthreonine. The residue at position 2 (Thr2) is a Phosphothreonine. The helical transmembrane segment at 41–61 threads the bilayer; sequence CAYFALGGWFTGTTFVTSWYT. His118 is a binding site for chlorophyll a. A helical transmembrane segment spans residues 125 to 141; that stretch reads GFMLRQFELARSVQLRP. Pheophytin a is bound by residues Gln130 and Asn143. The helical transmembrane segment at 153 to 166 threads the bilayer; it reads VFVSVFLIYPLGQS. His198 is a binding site for chlorophyll a. The helical transmembrane segment at 208 to 228 threads the bilayer; the sequence is AALLCAIHGATVENTLFEDGD. A plastoquinone-binding residues include His215 and Phe262. His215 provides a ligand contact to Fe cation. Residue His269 coordinates Fe cation. Residues 279 to 295 form a helical membrane-spanning segment; it reads GLWMSAIGVVGLALNLR.

The protein belongs to the reaction center PufL/M/PsbA/D family. In terms of assembly, PSII is composed of 1 copy each of membrane proteins PsbA, PsbB, PsbC, PsbD, PsbE, PsbF, PsbH, PsbI, PsbJ, PsbK, PsbL, PsbM, PsbT, PsbX, PsbY, PsbZ, Psb30/Ycf12, at least 3 peripheral proteins of the oxygen-evolving complex and a large number of cofactors. It forms dimeric complexes. Requires The D1/D2 heterodimer binds P680, chlorophylls that are the primary electron donor of PSII, and subsequent electron acceptors. It shares a non-heme iron and each subunit binds pheophytin, quinone, additional chlorophylls, carotenoids and lipids. There is also a Cl(-1) ion associated with D1 and D2, which is required for oxygen evolution. The PSII complex binds additional chlorophylls, carotenoids and specific lipids. as cofactor.

It localises to the plastid. Its subcellular location is the chloroplast thylakoid membrane. It catalyses the reaction 2 a plastoquinone + 4 hnu + 2 H2O = 2 a plastoquinol + O2. Its function is as follows. Photosystem II (PSII) is a light-driven water:plastoquinone oxidoreductase that uses light energy to abstract electrons from H(2)O, generating O(2) and a proton gradient subsequently used for ATP formation. It consists of a core antenna complex that captures photons, and an electron transfer chain that converts photonic excitation into a charge separation. The D1/D2 (PsbA/PsbD) reaction center heterodimer binds P680, the primary electron donor of PSII as well as several subsequent electron acceptors. D2 is needed for assembly of a stable PSII complex. This is Photosystem II D2 protein from Drimys granadensis.